The chain runs to 394 residues: Phosphoglycerate kinase (394 aa).

Residues 21–23, R36, 59–62, R118, and R151 each bind substrate; these read DFN and HLGR. S183 carries the phosphoserine modification. Positions 201 and 292 each coordinate ATP. T299 carries the post-translational modification Phosphothreonine. ATP is bound by residues E323 and 350–353; that span reads GGDS.

The protein belongs to the phosphoglycerate kinase family. In terms of assembly, monomer.

The protein resides in the cytoplasm. The catalysed reaction is (2R)-3-phosphoglycerate + ATP = (2R)-3-phospho-glyceroyl phosphate + ADP. Its pathway is carbohydrate degradation; glycolysis; pyruvate from D-glyceraldehyde 3-phosphate: step 2/5. This chain is Phosphoglycerate kinase, found in Bacillus thuringiensis subsp. konkukian (strain 97-27).